A 71-amino-acid chain; its full sequence is Small ribosomal subunit protein bS21 (71 aa).

It belongs to the bacterial ribosomal protein bS21 family.

The protein is Small ribosomal subunit protein bS21 of Alteromonas mediterranea (strain DSM 17117 / CIP 110805 / LMG 28347 / Deep ecotype).